A 376-amino-acid chain; its full sequence is Succinyl-diaminopimelate desuccinylase (376 aa).

Position 66 (H66) interacts with Zn(2+). Residue D68 is part of the active site. D99 provides a ligand contact to Zn(2+). Residue E133 is the Proton acceptor of the active site. E134, E162, and H348 together coordinate Zn(2+).

It belongs to the peptidase M20A family. DapE subfamily. In terms of assembly, homodimer. The cofactor is Zn(2+). Co(2+) is required as a cofactor.

The catalysed reaction is N-succinyl-(2S,6S)-2,6-diaminopimelate + H2O = (2S,6S)-2,6-diaminopimelate + succinate. The protein operates within amino-acid biosynthesis; L-lysine biosynthesis via DAP pathway; LL-2,6-diaminopimelate from (S)-tetrahydrodipicolinate (succinylase route): step 3/3. Catalyzes the hydrolysis of N-succinyl-L,L-diaminopimelic acid (SDAP), forming succinate and LL-2,6-diaminopimelate (DAP), an intermediate involved in the bacterial biosynthesis of lysine and meso-diaminopimelic acid, an essential component of bacterial cell walls. This is Succinyl-diaminopimelate desuccinylase from Nitrosococcus oceani (strain ATCC 19707 / BCRC 17464 / JCM 30415 / NCIMB 11848 / C-107).